Here is a 423-residue protein sequence, read N- to C-terminus: Mannan endo-1,4-beta-mannosidase (423 aa).

The first 27 residues, 1–27, serve as a signal peptide directing secretion; sequence MKTITTARLPWAAQSFALGICLIALLG. The 354-residue stretch at 56-409 folds into the GH26 domain; it reads METRSLFAFM…YADEFTAFNR (354 aa). Residues glutamate 121, histidine 143, and tryptophan 162 each coordinate substrate. The active-site Proton donor is the glutamate 212. Tryptophan 217 and tyrosine 285 together coordinate substrate. Catalysis depends on glutamate 320, which acts as the Nucleophile. Residues 360-361 and histidine 377 each bind substrate; that span reads WR.

Belongs to the glycosyl hydrolase 26 family. As to quaternary structure, homodimer.

The catalysed reaction is Random hydrolysis of (1-&gt;4)-beta-D-mannosidic linkages in mannans, galactomannans and glucomannans.. In terms of biological role, catalyzes the endo hydrolysis of beta-1,4-linked mannan and galactomannan, but displays little activity towards other polysaccharides located in the plant cell wall. Preferentially hydrolyzes the larger oligosaccharides and has greater activity against non-substituted polysaccharides. It displays tight specificity for mannose at both the -2 and the -1 subsites. Appears to act in synergy with alpha-galactosidase (AgaA) to elicit hydrolysis of galactomannan. The chain is Mannan endo-1,4-beta-mannosidase from Cellvibrio japonicus (strain Ueda107) (Pseudomonas fluorescens subsp. cellulosa).